The primary structure comprises 417 residues: Imidazolonepropionase (417 aa).

Residues His-80 and His-82 each contribute to the Fe(3+) site. Residues His-80 and His-82 each contribute to the Zn(2+) site. 4-imidazolone-5-propanoate contacts are provided by Arg-89, Tyr-152, and His-187. Tyr-152 contacts N-formimidoyl-L-glutamate. Residue His-252 coordinates Fe(3+). Zn(2+) is bound at residue His-252. Glu-255 contacts 4-imidazolone-5-propanoate. Fe(3+) is bound at residue Asp-326. Asp-326 lines the Zn(2+) pocket. N-formimidoyl-L-glutamate is bound by residues Asn-328 and Gly-330. Ser-331 serves as a coordination point for 4-imidazolone-5-propanoate.

Belongs to the metallo-dependent hydrolases superfamily. HutI family. Zn(2+) serves as cofactor. Fe(3+) is required as a cofactor.

Its subcellular location is the cytoplasm. The enzyme catalyses 4-imidazolone-5-propanoate + H2O = N-formimidoyl-L-glutamate. The protein operates within amino-acid degradation; L-histidine degradation into L-glutamate; N-formimidoyl-L-glutamate from L-histidine: step 3/3. Its function is as follows. Catalyzes the hydrolytic cleavage of the carbon-nitrogen bond in imidazolone-5-propanoate to yield N-formimidoyl-L-glutamate. It is the third step in the universal histidine degradation pathway. In Bacteroides thetaiotaomicron (strain ATCC 29148 / DSM 2079 / JCM 5827 / CCUG 10774 / NCTC 10582 / VPI-5482 / E50), this protein is Imidazolonepropionase.